A 322-amino-acid polypeptide reads, in one-letter code: Myeloid-associated differentiation marker (322 aa).

The interval 1–25 (MPVTVTRTTITTTTTSSSGQGSPTI) is disordered. Position 22 is a phosphoserine (Ser22). MARVEL domains lie at 31-163 (ALTQ…ARPG) and 168-319 (YMAT…HLVF). The next 8 membrane-spanning stretches (helical) occupy residues 41–61 (LLQL…GAWT), 70–90 (FTWC…LCGL), 101–121 (FPIT…IIYP), 137–157 (AIAA…EVAW), 171–191 (TVPG…FAFI), 203–223 (LEWC…AILL), 239–259 (FLSG…VLWP), and 294–314 (LAVA…LVHS).

This sequence belongs to the MAL family.

It is found in the membrane. In Pongo abelii (Sumatran orangutan), this protein is Myeloid-associated differentiation marker (MYADM).